We begin with the raw amino-acid sequence, 244 residues long: Large ribosomal subunit protein uL3 (244 aa).

The tract at residues 215–244 is disordered; sequence KKPPRERRGFAGSSTVDPLKASKRAVAKKK. The segment covering 235-244 has biased composition (basic residues); sequence ASKRAVAKKK.

The protein belongs to the universal ribosomal protein uL3 family. As to quaternary structure, part of the 50S ribosomal subunit. Forms a cluster with proteins L14 and L19.

In terms of biological role, one of the primary rRNA binding proteins, it binds directly near the 3'-end of the 23S rRNA, where it nucleates assembly of the 50S subunit. The polypeptide is Large ribosomal subunit protein uL3 (Koribacter versatilis (strain Ellin345)).